The following is a 21-amino-acid chain: Tricyclic peptide MS-271 (21 aa).

The segment at residues 1 to 9 (CLGVGSCND) is a cross-link (3-cysteinyl-aspartic acid (Cys-Asp)). Intrachain disulfides connect Cys-1/Cys-13 and Cys-7/Cys-19. Position 21 is a D-tryptophan (Trp-21).

Functionally, inhibits chicken myosin light chain kinase with an IC(50) of 8 M. Does not inhibit bovine cAMP-dependent protein kinase or rat protein kinase C. Antibacterial activity against the Gram-positive bacteria B.subtilis, E.faecium and S.aureus. No antibacterial activity against the Gram-negative bacteria E.coli, K.pneumoniae, P.aeruginosa, P.vulgaris, S.sonnei and S.typhosa. No antifungal activity against C.albicans. The protein is Tricyclic peptide MS-271 of Streptomyces sp.